Reading from the N-terminus, the 510-residue chain is Major facilitator superfamily domain-containing protein 4A (510 aa).

The next 12 membrane-spanning stretches (helical) occupy residues 19-39 (LTYWSVFFSFGLCIAFLGPTL), 53-73 (ISWVFFSQQLCLLLGSALGGV), 82-102 (LWALFTSTLVISLVFAVIPFC), 107-127 (VLASVIALAGLAMGCIDTVAN), 139-159 (AFFLQVLHFFVGLGALLSPLI), 218-238 (YAFWIMALINLPVPLAVLFLL), 303-323 (FFAIHITAALVLFMTDGMMGA), 345-365 (GYLPSLFWGFITLGRFISIPV), 380-400 (VGVVVTFLMLLIFSYNVIFLF), 401-421 (VGTASLGLFLSSTFPSMLAYT), 434-454 (VLVTGAGIGEMVLQMLVGLIF), and 462-482 (FLVCGVIFGCLAFIFYILLLF).

This sequence belongs to the major facilitator superfamily.

The protein localises to the membrane. This Mus musculus (Mouse) protein is Major facilitator superfamily domain-containing protein 4A.